Reading from the N-terminus, the 199-residue chain is Superoxide dismutase [Mn/Fe] 2 (199 aa).

4 residues coordinate Fe(3+): His-27, His-81, Asp-161, and His-165. Mn(2+) contacts are provided by His-27, His-81, Asp-161, and His-165.

It belongs to the iron/manganese superoxide dismutase family. As to quaternary structure, homodimer. Can also form a heterodimer with SodA. It depends on Mn(2+) as a cofactor. Fe(3+) serves as cofactor.

It carries out the reaction 2 superoxide + 2 H(+) = H2O2 + O2. Functionally, destroys superoxide anion radicals which are normally produced within the cells and which are toxic to biological systems. Catalyzes the dismutation of superoxide anion radicals into O2 and H2O2 by successive reduction and oxidation of the transition metal ion at the active site. In Staphylococcus aureus (strain bovine RF122 / ET3-1), this protein is Superoxide dismutase [Mn/Fe] 2 (sodM).